A 1407-amino-acid polypeptide reads, in one-letter code: Metabotropic glutamate receptor-like protein P (1407 aa).

Over 1-696 (MKFKKKNIYW…KTIKVTSFVK (696 aa)) the chain is Extracellular. N-linked (GlcNAc...) asparagine glycans are attached at residues Asn-43 and Asn-58. PbH1 repeat units lie at residues 93–118 (ISDI…FDGG) and 129–150 (FVNV…FLYN). N-linked (GlcNAc...) asparagine glycans are attached at residues Asn-162, Asn-179, Asn-182, Asn-230, Asn-241, Asn-270, Asn-368, Asn-391, Asn-464, Asn-512, Asn-539, Asn-544, Asn-554, Asn-571, Asn-627, and Asn-646. The PbH1 3 repeat unit spans residues 254 to 279 (ISNVIFESCEFIGNRANSTGGLSFLT). Residues 452 to 476 (GYSVYIENCEVKNNTGLFKGCFIDT) form a PbH1 4 repeat. The chain crosses the membrane as a helical span at residues 697–717 (FLVGTLAAILLIILIISGFIS). The Cytoplasmic segment spans residues 718–731 (LKYRKKRVIRYSNP). Residues 732–752 (LFLCIILVGCIIFLITIPVLF) form a helical membrane-spanning segment. Residues 753 to 758 (GSTSAT) lie on the Extracellular side of the membrane. A helical membrane pass occupies residues 759–779 (CKIRFPIIVIGSCLVTSSVFI). Residues 780–806 (KQFRIWRLIKDIQLLRETNVENKYLLK) are Cytoplasmic-facing. The chain crosses the membrane as a helical span at residues 807 to 827 (FISILMVIPIIIVICSFFIFP). Residues 828–853 (THEKYTFNQRDITITHYCSDGSYLAY) lie on the Extracellular side of the membrane. A helical transmembrane segment spans residues 854 to 874 (VIIFLVYQMAILLFGCYLVIV). Residues 875–890 (CRKFRSIPGTFNEATY) lie on the Cytoplasmic side of the membrane. The chain crosses the membrane as a helical span at residues 891–911 (IGILIYNYTVVLIVAIPLAYV). Residues 912–919 (FNKNPLAN) are Extracellular-facing. Residues 920 to 940 (FLIFSISIIVFVLSTIILLFI) form a helical membrane-spanning segment. The Cytoplasmic portion of the chain corresponds to 941–1407 (PKFHFLLRKK…LSPINLSKRK (467 aa)). A compositionally biased stretch (polar residues) spans 991–1004 (QQRQGNLYNNNSLG). Disordered regions lie at residues 991-1072 (QQRQ…DPNF), 1084-1248 (GKRK…SSIG), 1267-1351 (KKVK…NFNE), and 1369-1407 (FHQK…SKRK). The span at 1005 to 1029 (RSISSNTRKRSNNNINNNNNNNSFN) shows a compositional bias: low complexity. The segment covering 1030 to 1040 (MTGFSDSSSTI) has biased composition (polar residues). The segment covering 1041–1071 (SNPNLTSFTSSPSSLNSSSDSDSTPDFNDPN) has biased composition (low complexity). A compositionally biased stretch (basic and acidic residues) spans 1084-1093 (GKRKSIEKNK). Composition is skewed to low complexity over residues 1099-1147 (PNSP…NTPI), 1154-1246 (SSKT…SDSS), and 1276-1339 (SDST…NNNN). Residues 1315–1344 (NNNNNNNNNNNNNINNNNNNANNNNSDTDD) are a coiled coil.

The protein belongs to the G-protein coupled receptor 3 family. GABA-B receptor subfamily.

The protein localises to the membrane. This chain is Metabotropic glutamate receptor-like protein P (grlP), found in Dictyostelium discoideum (Social amoeba).